The sequence spans 276 residues: Malonyl-[acyl-carrier protein] O-methyltransferase (276 aa).

This sequence belongs to the methyltransferase superfamily.

The enzyme catalyses malonyl-[ACP] + S-adenosyl-L-methionine = malonyl-[ACP] methyl ester + S-adenosyl-L-homocysteine. It participates in cofactor biosynthesis; biotin biosynthesis. Functionally, converts the free carboxyl group of a malonyl-thioester to its methyl ester by transfer of a methyl group from S-adenosyl-L-methionine (SAM). It allows to synthesize pimeloyl-ACP via the fatty acid synthetic pathway. The chain is Malonyl-[acyl-carrier protein] O-methyltransferase from Paenibacillus sp. (strain JDR-2).